Consider the following 320-residue polypeptide: Dipeptide transport system permease protein DppC (320 aa).

A run of 6 helical transmembrane segments spans residues 56-76 (LAMA…IGPF), 121-141 (LFVG…YGGV), 154-176 (MRII…MVLM), 230-252 (LLPN…AIFA), 267-287 (FASW…GHWW), and 289-309 (LFFP…LGDG). One can recognise an ABC transmembrane type-1 domain in the interval 117–307 (ARISLFVGVM…LTMYAFNVLG (191 aa)).

Belongs to the binding-protein-dependent transport system permease family. OppBC subfamily.

The protein localises to the cell membrane. Probably part of the ABC transporter DppBCDE involved in dipeptide transport. Responsible for the translocation of the substrate across the membrane. The sequence is that of Dipeptide transport system permease protein DppC (dppC) from Bacillus subtilis (strain 168).